We begin with the raw amino-acid sequence, 81 residues long: Trefoil factor 1 (81 aa).

The signal sequence occupies residues 1-21 (MEHKVTCVLAMVLMLALSSLA). Q22 carries the pyrrolidone carboxylic acid modification. One can recognise a P-type domain in the interval 26–69 (ETCAVIPRERINCGFPGVTAQQCKEKGCCFDDSVRGFPWCFRPL). Intrachain disulfides connect C28–C54, C38–C53, and C48–C65.

The protein localises to the secreted. Stabilizer of the mucous gel overlying the gastrointestinal mucosa that provides a physical barrier against various noxious agents. This is Trefoil factor 1 (Tff1) from Rattus norvegicus (Rat).